Here is a 247-residue protein sequence, read N- to C-terminus: Type III pantothenate kinase (247 aa).

6–13 contributes to the ATP binding site; the sequence is DVGNTHTT. 101–104 lines the substrate pocket; sequence GADR. Catalysis depends on Asp103, which acts as the Proton acceptor. Asp123 provides a ligand contact to K(+). Residue Thr126 coordinates ATP. Residue Thr177 participates in substrate binding.

Belongs to the type III pantothenate kinase family. Homodimer. The cofactor is NH4(+). K(+) serves as cofactor.

It is found in the cytoplasm. The catalysed reaction is (R)-pantothenate + ATP = (R)-4'-phosphopantothenate + ADP + H(+). It functions in the pathway cofactor biosynthesis; coenzyme A biosynthesis; CoA from (R)-pantothenate: step 1/5. Functionally, catalyzes the phosphorylation of pantothenate (Pan), the first step in CoA biosynthesis. The polypeptide is Type III pantothenate kinase (Thermosipho melanesiensis (strain DSM 12029 / CIP 104789 / BI429)).